A 484-amino-acid chain; its full sequence is MHQKTVAEISAALHAGEISSRELTDSLLKRIEQFDPRLNSLITVTAEQARAAADAADARLRAGEAGPLTGVPLVHKDIFCTDGVATTCGSRMLEPFRAPYDATVVRRLAEAGAVMLGKANMDEFAMGSSNETSYFGPVRNPWDLDAVPGGSSGGSAAAVAARLAPAATGTDTGGSIRQPAALSGICGLKPTYGRVSRYGMVAFASSLDQAGPFARTAEDLALLLGGMAGLDERDSTSVDHVVPDYSESLNRSIRGLRIGVPKEFFGEGLDADVRSRVEAALQVLEGEGAELVEVQLPNMELALPAYYVIAPAEASSNLARFDGVRFGHRCADPQDLEDLYKRSRAEGFGDEVQRRILVGTYALSAGYYDAYYRKAQQVRRLVADDFRQALDQVDVLAGPTSPTPAFDLGERADDPVQMYLSDIYTLGVNLAGLPGLSVPAGFSRGRPVGLQLIGGYFDEARLLNVGHKYQQVTDWHKQVPEGFE.

Residues Lys-76 and Ser-151 each act as charge relay system in the active site. Residue Ser-175 is the Acyl-ester intermediate of the active site.

This sequence belongs to the amidase family. GatA subfamily. As to quaternary structure, heterotrimer of A, B and C subunits.

The enzyme catalyses L-glutamyl-tRNA(Gln) + L-glutamine + ATP + H2O = L-glutaminyl-tRNA(Gln) + L-glutamate + ADP + phosphate + H(+). Its function is as follows. Allows the formation of correctly charged Gln-tRNA(Gln) through the transamidation of misacylated Glu-tRNA(Gln) in organisms which lack glutaminyl-tRNA synthetase. The reaction takes place in the presence of glutamine and ATP through an activated gamma-phospho-Glu-tRNA(Gln). This chain is Glutamyl-tRNA(Gln) amidotransferase subunit A, found in Halorhodospira halophila (strain DSM 244 / SL1) (Ectothiorhodospira halophila (strain DSM 244 / SL1)).